Reading from the N-terminus, the 352-residue chain is Ferrochelatase (352 aa).

Residues His-222 and Glu-303 each coordinate Fe cation.

This sequence belongs to the ferrochelatase family.

Its subcellular location is the cytoplasm. It catalyses the reaction heme b + 2 H(+) = protoporphyrin IX + Fe(2+). It functions in the pathway porphyrin-containing compound metabolism; protoheme biosynthesis; protoheme from protoporphyrin-IX: step 1/1. Catalyzes the ferrous insertion into protoporphyrin IX. The polypeptide is Ferrochelatase (Brucella canis (strain ATCC 23365 / NCTC 10854 / RM-666)).